Consider the following 491-residue polypeptide: MSLKSERRGIHVDQSELLCKKGCGYYGNPAWQGFCSKCWREEYHKARQRQIQEDWELAERLQREEEEAFASSQSSQGAQSLTFSKFEEKKTNEKTRKVTTVKKFFSASSRAGSKKEIQEAKAPSPSINRQTSIETDRVTKEFIDFLKTFHKTGQEVYKQTKMFLEAMPYKRDLSIEEQSECTQDFYQNVAERMQTRGKVPPEKVEKIMDQIEKHIMTRLYKFVFCPETTDDEKKDLAIQKRIRALHWVTPQMLCVPVNEEIPEVSDMVVKAITDIIEMDSKRVPRDKLACITRCSKHIFNAIKITKNEPASADDFLPTLIYIVLKGNPPRLQSNIQYITRFCNPSRLMTGEDGYYFTNLCCAVAFIEKLDAQSLNLSQEDFDRYMSGQTSPRKQESESWPPEACLGVKQMYKNLDLLSQLNERQERIMNEAKKLEKDLIDWTDGIAKEVQDIVEKYPLEIKPPNQPLAAIDSENVENDKLPPPLQPQVYAG.

Positions 1–74 (MSLKSERRGI…EEEAFASSQS (74 aa)) are interaction with ubiquitinated proteins. The A20-type zinc-finger motif lies at 13 to 47 (DQSELLCKKGCGYYGNPAWQGFCSKCWREEYHKAR). Zn(2+)-binding residues include Cys19, Cys23, Cys35, and Cys38. The interval 66-85 (EEAFASSQSSQGAQSLTFSK) is disordered. Positions 69 to 84 (FASSQSSQGAQSLTFS) are enriched in low complexity. 2 positions are modified to phosphoserine: Ser124 and Ser132. 2 positions are modified to N6-acetyllysine: Lys151 and Lys170. The region spanning 232–375 (EKKDLAIQKR…IEKLDAQSLN (144 aa)) is the VPS9 domain. 3 positions are modified to phosphoserine: Ser373, Ser377, and Ser390. A coiled-coil region spans residues 407-448 (VKQMYKNLDLLSQLNERQERIMNEAKKLEKDLIDWTDGIAKE). A disordered region spans residues 462-491 (PPNQPLAAIDSENVENDKLPPPLQPQVYAG).

As to quaternary structure, heterodimer with RABEP1. The heterodimer binds RAB4A and RAB5A that have been activated by GTP-binding. Binds TSC2, GGA1, GGA2, GGA3, AP1G1 and AP1G2. Interacts with RAB21, and with 100-fold lower affinity also with RAB22. Interacts with ubiquitinated EGFR. Interacts with RGS14; the interaction is GTP-dependent. In terms of processing, monoubiquitinated. In terms of tissue distribution, expressed in the white matter tracts of the cerebellum, the fimbria hippocampi and the corpus callosum.

It is found in the cytoplasm. It localises to the early endosome. Its subcellular location is the recycling endosome. Functionally, rab effector protein acting as linker between gamma-adaptin, RAB4A or RAB5A. Involved in endocytic membrane fusion and membrane trafficking of recycling endosomes. Stimulates nucleotide exchange on RAB5A. Can act as a ubiquitin ligase. This is Rab5 GDP/GTP exchange factor (Rabgef1) from Mus musculus (Mouse).